Reading from the N-terminus, the 143-residue chain is Hemoglobin subunit alpha (143 aa).

Residues 2–143 (SLTARDKSVV…LSAALADKYR (142 aa)) form the Globin domain. Residue His60 coordinates O2. Residue His89 participates in heme b binding.

It belongs to the globin family. Heterotetramer of two alpha chains and two beta chains. In terms of tissue distribution, red blood cells.

Its function is as follows. Involved in oxygen transport from gills to the various peripheral tissues. The chain is Hemoglobin subunit alpha (hba) from Salmo salar (Atlantic salmon).